The primary structure comprises 81 residues: Small cysteine-rich protein 6 (81 aa).

The signal sequence occupies residues 1 to 23 (MDTKVACLLLIILGALTVQGAVS). A propeptide spanning residues 24–25 (GN) is cleaved from the precursor.

The protein belongs to the Cnidaria small cysteine-rich protein (SCRiP) family. beta subfamily. Contains 4 disulfide bonds.

It is found in the secreted. It localises to the nematocyst. Its function is as follows. Induces neurotoxic symptoms on zebrafish. Has also been claimed to be implied in calcification, but tests on homolog proteins suggest that proteins of this family have a neurotoxic function and not a calcification function. In Orbicella faveolata (Mountainous star coral), this protein is Small cysteine-rich protein 6.